A 209-amino-acid polypeptide reads, in one-letter code: Uracil phosphoribosyltransferase (209 aa).

Residues R79, R104, and 131-139 contribute to the 5-phospho-alpha-D-ribose 1-diphosphate site; that span reads DPMLATGVS. Residues I194 and 199–201 each bind uracil; that span reads GDA. Residue D200 coordinates 5-phospho-alpha-D-ribose 1-diphosphate.

It belongs to the UPRTase family. It depends on Mg(2+) as a cofactor.

The catalysed reaction is UMP + diphosphate = 5-phospho-alpha-D-ribose 1-diphosphate + uracil. The protein operates within pyrimidine metabolism; UMP biosynthesis via salvage pathway; UMP from uracil: step 1/1. Its activity is regulated as follows. Allosterically activated by GTP. In terms of biological role, catalyzes the conversion of uracil and 5-phospho-alpha-D-ribose 1-diphosphate (PRPP) to UMP and diphosphate. This Thermotoga neapolitana (strain ATCC 49049 / DSM 4359 / NBRC 107923 / NS-E) protein is Uracil phosphoribosyltransferase.